Here is a 206-residue protein sequence, read N- to C-terminus: Thymidylate kinase (206 aa).

ATP is bound at residue Gly10 to Thr17.

The protein belongs to the thymidylate kinase family.

It catalyses the reaction dTMP + ATP = dTDP + ADP. Its function is as follows. Phosphorylation of dTMP to form dTDP in both de novo and salvage pathways of dTTP synthesis. The chain is Thymidylate kinase from Bifidobacterium longum (strain DJO10A).